Here is a 337-residue protein sequence, read N- to C-terminus: Anthranilate phosphoribosyltransferase (337 aa).

5-phospho-alpha-D-ribose 1-diphosphate contacts are provided by residues G79, 82-83 (GD), T87, 89-92 (NVST), 107-115 (KHGNRSVSS), and S119. Anthranilate is bound at residue G79. S91 is a binding site for Mg(2+). N110 is an anthranilate binding site. R165 serves as a coordination point for anthranilate. Mg(2+)-binding residues include D223 and E224.

This sequence belongs to the anthranilate phosphoribosyltransferase family. In terms of assembly, homodimer. Mg(2+) serves as cofactor.

It carries out the reaction N-(5-phospho-beta-D-ribosyl)anthranilate + diphosphate = 5-phospho-alpha-D-ribose 1-diphosphate + anthranilate. Its pathway is amino-acid biosynthesis; L-tryptophan biosynthesis; L-tryptophan from chorismate: step 2/5. Functionally, catalyzes the transfer of the phosphoribosyl group of 5-phosphorylribose-1-pyrophosphate (PRPP) to anthranilate to yield N-(5'-phosphoribosyl)-anthranilate (PRA). This Aeromonas salmonicida (strain A449) protein is Anthranilate phosphoribosyltransferase.